The following is a 1431-amino-acid chain: MELPKEMEEYFSMLQREIDKAYEIAKKARAQGKDPSLDVEIPQASDMAGRVESLVGPPGVAERIRELVKEYGKEIAALKIVDEIIDGKFGDLGSKEKYAEQAVRTALAILTEGVVSAPIEGIASVKIKRNTWSDNSEYLALYYAGPIRSSGGTAQALSVLVGDYVRRKLGLDRFKPSEKHIERMVEEVDLYHRTVSRLQYHPSPEEVRLAMRNIPIEITGEATDEVEVSHRDIPGVETNQLRGGAILVLAEGVLQKAKKLVKYIDKMGIEGWEWLKEFVEAKEKGEEIEEEGSAESTVEETKVEVDMGFYYSLYQKFKSEIAPNDKYAKEIIGGRPLFSDPSRNGGFRLRYGRSRVSGFATWGINPATMILVDEFLAIGTQLKTERPGKGAVVTPVTTIEGPIVKLKDGSVVKVDDYKLALKIRDEVEEILYLGDAVIAFGDFVENNQTLLPANYCEEWWILEFTKALNEIYEVELKPFEVNSSEDLEEAADYLEVDIEFLKELLKDPLRTKPPVELAIHFSEILGIPLHPYYTLYWNSVKPEQVEKLWRVLKEHAHIDWDNFRGIKFARRIVIPLEKLRDSKRALELLGLPHKVEGKNVIVDYPWAAALLTPLGNLEWEFRAKPLHTTIDIINENNEIKLRDRGISWIGARMGRPEKAKERKMKPPVQVLFPIGLAGGSSRDIKKAAEEGKVAEVEIALFKCPKCGHVGPEHICPNCGTRKELIWVCPRCNAEYPESQASGYNYTCPKCNVKLKPYAKRKIKPSELLKRAMDNVKVYGIDKLKGVMGMTSGWKMPEPLEKGLLRAKNDVYVFKDGTIRFDATDAPITHFRPREIGVSVEKLRELGYTHDFEGNPLVSEDQIVELKPQDIILSKEAGKYLLKVAKFVDDLLEKFYGLPRFYNAEKMEDLIGHLVIGLAPHTSAGIVGRIIGFVDALVGYAHPYFHAAKRRNCFPGDTRILVQINGTPQRVTLKELYELFDEEHYESMVYVRKKPKVDIKVYSFNPEEGKVVLTDIEEVIKAPATDHLIRFELELGSSFETTVDHPVLVYENGKFVEKRAFEVREGNIIIIIDESTLEPLKVAVKKIEFIEPPEDFVFSLNAKKYHTVIINENIVTHQCDGDEDAVMLLLDALLNFSRYYLPEKRGGKMDAPLVITTRLDPREVDSEVHNMDIVRYYPLEFYEATYELKSPKELVGVIERVEDRLGKPEMYYGLKFTHDTDDIALGPKMSLYKQLGDMEEKVKRQLDVARRIRAVDEHKVAETILNSHLIPDLRGNLRSFTRQEFRCVKCNTKFRRPPLDGKCPICGGKIVLTVSKGAIEKYLGTAKMLVTEYKVKNYTRQRICLTERDIDSLFETVFPETQLTLLVNPNDICQRIIMERTGGSKKSGLLENFANGYNKGKKEEMPKKQRKKEQEKSKKRKVISLDDFFSRK.

Residues 1388–1431 are disordered; that stretch reads LLENFANGYNKGKKEEMPKKQRKKEQEKSKKRKVISLDDFFSRK. Residues 1399 to 1415 show a composition bias toward basic and acidic residues; it reads GKKEEMPKKQRKKEQEK.

Belongs to the archaeal DNA polymerase II family. As to quaternary structure, heterodimer of a large subunit and a small subunit. This protein undergoes a protein self splicing that involves a post-translational excision of the intervening region (intein) followed by peptide ligation.

The enzyme catalyses DNA(n) + a 2'-deoxyribonucleoside 5'-triphosphate = DNA(n+1) + diphosphate. It catalyses the reaction Exonucleolytic cleavage in the 3'- to 5'-direction to yield nucleoside 5'-phosphates.. Possesses two activities: a DNA synthesis (polymerase) and an exonucleolytic activity that degrades single-stranded DNA in the 3'- to 5'-direction. Has a template-primer preference which is characteristic of a replicative DNA polymerase. The protein is DNA polymerase II large subunit (polC) of Pyrococcus horikoshii (strain ATCC 700860 / DSM 12428 / JCM 9974 / NBRC 100139 / OT-3).